The sequence spans 195 residues: Imidazoleglycerol-phosphate dehydratase (195 aa).

The protein belongs to the imidazoleglycerol-phosphate dehydratase family.

It is found in the cytoplasm. It catalyses the reaction D-erythro-1-(imidazol-4-yl)glycerol 3-phosphate = 3-(imidazol-4-yl)-2-oxopropyl phosphate + H2O. It functions in the pathway amino-acid biosynthesis; L-histidine biosynthesis; L-histidine from 5-phospho-alpha-D-ribose 1-diphosphate: step 6/9. This is Imidazoleglycerol-phosphate dehydratase from Burkholderia cenocepacia (strain HI2424).